Here is a 247-residue protein sequence, read N- to C-terminus: NifU-like scaffold protein (247 aa).

The protein belongs to the NifU family. Homodimer.

The protein resides in the plastid. It is found in the apicoplast. Its pathway is cofactor biosynthesis; iron-sulfur cluster biosynthesis. Binds and transfers [4Fe-4S] iron-sulfur clusters to target proteins. The sequence is that of NifU-like scaffold protein from Plasmodium falciparum (isolate 3D7).